A 64-amino-acid polypeptide reads, in one-letter code: Large ribosomal subunit protein bL33 (64 aa).

Positions 16-25 (EARTSSEPRR) are enriched in basic and acidic residues. Residues 16-39 (EARTSSEPRRSNGISRYTTEKNKR) are disordered.

It belongs to the bacterial ribosomal protein bL33 family.

The protein is Large ribosomal subunit protein bL33 of Prochlorococcus marinus (strain MIT 9515).